Here is a 297-residue protein sequence, read N- to C-terminus: Phosphoribosylaminoimidazole-succinocarboxamide synthase (297 aa).

The protein belongs to the SAICAR synthetase family.

It catalyses the reaction 5-amino-1-(5-phospho-D-ribosyl)imidazole-4-carboxylate + L-aspartate + ATP = (2S)-2-[5-amino-1-(5-phospho-beta-D-ribosyl)imidazole-4-carboxamido]succinate + ADP + phosphate + 2 H(+). Its pathway is purine metabolism; IMP biosynthesis via de novo pathway; 5-amino-1-(5-phospho-D-ribosyl)imidazole-4-carboxamide from 5-amino-1-(5-phospho-D-ribosyl)imidazole-4-carboxylate: step 1/2. The sequence is that of Phosphoribosylaminoimidazole-succinocarboxamide synthase from Mycobacterium ulcerans (strain Agy99).